The chain runs to 200 residues: Pyridoxamine 5'-phosphate oxidase homolog (200 aa).

Phe60, Lys68, and Asn125 together coordinate FMN.

It belongs to the pyridoxamine 5'-phosphate oxidase family. Requires FMN as cofactor.

It localises to the cytoplasm. Its subcellular location is the nucleus. This is Pyridoxamine 5'-phosphate oxidase homolog from Saccharomyces cerevisiae (strain ATCC 204508 / S288c) (Baker's yeast).